The sequence spans 209 residues: Imidazole glycerol phosphate synthase subunit HisH (209 aa).

In terms of domain architecture, Glutamine amidotransferase type-1 spans 3–209 (KIAIIDYGMG…SILKNFGEMK (207 aa)). C81 serves as the catalytic Nucleophile. Residues H190 and E192 contribute to the active site.

In terms of assembly, heterodimer of HisH and HisF.

Its subcellular location is the cytoplasm. It catalyses the reaction 5-[(5-phospho-1-deoxy-D-ribulos-1-ylimino)methylamino]-1-(5-phospho-beta-D-ribosyl)imidazole-4-carboxamide + L-glutamine = D-erythro-1-(imidazol-4-yl)glycerol 3-phosphate + 5-amino-1-(5-phospho-beta-D-ribosyl)imidazole-4-carboxamide + L-glutamate + H(+). The enzyme catalyses L-glutamine + H2O = L-glutamate + NH4(+). The protein operates within amino-acid biosynthesis; L-histidine biosynthesis; L-histidine from 5-phospho-alpha-D-ribose 1-diphosphate: step 5/9. Functionally, IGPS catalyzes the conversion of PRFAR and glutamine to IGP, AICAR and glutamate. The HisH subunit catalyzes the hydrolysis of glutamine to glutamate and ammonia as part of the synthesis of IGP and AICAR. The resulting ammonia molecule is channeled to the active site of HisF. In Geobacter sulfurreducens (strain ATCC 51573 / DSM 12127 / PCA), this protein is Imidazole glycerol phosphate synthase subunit HisH.